The sequence spans 190 residues: Elongation factor P-like protein (190 aa).

This sequence belongs to the elongation factor P family.

This chain is Elongation factor P-like protein, found in Yersinia enterocolitica serotype O:8 / biotype 1B (strain NCTC 13174 / 8081).